The chain runs to 336 residues: Probable tRNA pseudouridine synthase B (336 aa).

The active-site Nucleophile is the D81. In terms of domain architecture, PUA spans 248–323 (LKKVVVKDSA…VAVDVERVYM (76 aa)).

This sequence belongs to the pseudouridine synthase TruB family. Type 2 subfamily.

It catalyses the reaction uridine(55) in tRNA = pseudouridine(55) in tRNA. Functionally, could be responsible for synthesis of pseudouridine from uracil-55 in the psi GC loop of transfer RNAs. In Methanocaldococcus jannaschii (strain ATCC 43067 / DSM 2661 / JAL-1 / JCM 10045 / NBRC 100440) (Methanococcus jannaschii), this protein is Probable tRNA pseudouridine synthase B.